A 439-amino-acid chain; its full sequence is Glutamate--tRNA ligase 1 (439 aa).

The 'HIGH' region motif lies at 6–16; it reads PSPTGDMHIGN. Residues 232 to 236 carry the 'KMSKS' region motif; it reads KMSKR. K235 lines the ATP pocket.

Belongs to the class-I aminoacyl-tRNA synthetase family. Glutamate--tRNA ligase type 1 subfamily. Monomer.

The protein resides in the cytoplasm. The catalysed reaction is tRNA(Glu) + L-glutamate + ATP = L-glutamyl-tRNA(Glu) + AMP + diphosphate. In terms of biological role, catalyzes the attachment of glutamate to tRNA(Glu) in a two-step reaction: glutamate is first activated by ATP to form Glu-AMP and then transferred to the acceptor end of tRNA(Glu). In Helicobacter acinonychis (strain Sheeba), this protein is Glutamate--tRNA ligase 1.